We begin with the raw amino-acid sequence, 217 residues long: Large ribosomal subunit protein uL1 (217 aa).

The protein belongs to the universal ribosomal protein uL1 family. Part of the 50S ribosomal subunit.

Binds directly to 23S rRNA. Probably involved in E site tRNA release. Functionally, protein L1 is also a translational repressor protein, it controls the translation of its operon by binding to its mRNA. This is Large ribosomal subunit protein uL1 from Hyperthermus butylicus (strain DSM 5456 / JCM 9403 / PLM1-5).